A 570-amino-acid chain; its full sequence is Fibropellin-3 (570 aa).

The signal sequence occupies residues 1–17; it reads MKVSLLAVLLLSIVAAT. The 38-residue stretch at 18–55 folds into the EGF-like 1 domain; the sequence is YGQGECGSNPCENGSVCRDGEGTYICECQMGYDGQNCD. Cystine bridges form between Cys23–Cys34, Cys28–Cys43, Cys45–Cys54, and Cys62–Cys88. N-linked (GlcNAc...) asparagine glycosylation occurs at Asn30. The region spanning 62-175 is the CUB domain; it reads CGYNIFESTG…RKGFRITFSS (114 aa). Asn136 is a glycosylation site (N-linked (GlcNAc...) asparagine). The 37-residue stretch at 176 to 212 folds into the EGF-like 2; calcium-binding domain; sequence DGDDCTPNPCLNGATCVDQVNDYQCICAPGFTGDNCE. Intrachain disulfides connect Cys180–Cys191, Cys185–Cys200, Cys202–Cys211, Cys218–Cys229, Cys223–Cys238, Cys240–Cys249, Cys256–Cys267, Cys261–Cys276, Cys278–Cys287, Cys294–Cys305, Cys299–Cys314, Cys316–Cys325, Cys332–Cys343, Cys337–Cys352, Cys354–Cys363, Cys370–Cys381, Cys375–Cys390, Cys392–Cys401, Cys408–Cys419, Cys413–Cys428, Cys430–Cys439, and Cys445–Cys521. The EGF-like 3; calcium-binding domain occupies 214 to 250; sequence DIDECASAPCRNGGACVDQVNGYTCNCIPGFNGVNCE. The EGF-like 4; calcium-binding domain occupies 252-288; it reads NINECASIPCLNGGICVDGINQFACTCLPGYTGILCE. The EGF-like 5; calcium-binding domain occupies 290-326; sequence DINECASSPCQNGGSCTDAVNRYTCDCRAGFTGSNCE. The region spanning 328 to 364 is the EGF-like 6; calcium-binding domain; sequence NINECASSPCLNGGSCLDGVDGYVCQCLPNYTGTHCE. N-linked (GlcNAc...) asparagine glycosylation is present at Asn357. Residues 366–402 enclose the EGF-like 7 domain; the sequence is SLDACASLPCQNGGVCTNVGGDYVCECLPGYTGINCE. One can recognise an EGF-like 8; calcium-binding domain in the interval 404-440; that stretch reads DINECASLPCQNGGECINGIAMYICQCRQGYAGVNCE. Positions 443-562 constitute an Avidin-like domain; the sequence is GFCDLEGVWF…GQDKWTRYEQ (120 aa).

In terms of assembly, homotetramer.

Its subcellular location is the secreted. It is found in the extracellular space. Its function is as follows. Forms the apical lamina, a component of the extracellular matrix. This chain is Fibropellin-3 (EGF3), found in Strongylocentrotus purpuratus (Purple sea urchin).